The sequence spans 200 residues: GTP cyclohydrolase-2 (200 aa).

49–53 contributes to the GTP binding site; sequence RIHSE. 3 residues coordinate Zn(2+): cysteine 54, cysteine 65, and cysteine 67. Residues glutamine 70, 92–94, and threonine 114 each bind GTP; that span reads EGR. Aspartate 126 functions as the Proton acceptor in the catalytic mechanism. The active-site Nucleophile is arginine 128. Residues threonine 149 and lysine 154 each coordinate GTP.

This sequence belongs to the GTP cyclohydrolase II family. Zn(2+) serves as cofactor.

The catalysed reaction is GTP + 4 H2O = 2,5-diamino-6-hydroxy-4-(5-phosphoribosylamino)-pyrimidine + formate + 2 phosphate + 3 H(+). It functions in the pathway cofactor biosynthesis; riboflavin biosynthesis; 5-amino-6-(D-ribitylamino)uracil from GTP: step 1/4. Functionally, catalyzes the conversion of GTP to 2,5-diamino-6-ribosylamino-4(3H)-pyrimidinone 5'-phosphate (DARP), formate and pyrophosphate. This is GTP cyclohydrolase-2 from Saccharophagus degradans (strain 2-40 / ATCC 43961 / DSM 17024).